The primary structure comprises 459 residues: Alcohol acyl transferase 1 allele RGc (459 aa).

Active-site proton acceptor residues include His164 and Asn385.

Belongs to the plant acyltransferase family. In terms of tissue distribution, expressed at very low levels in the skin of ripe fruit.

In terms of biological role, involved in the biosynthesis of volatile esters which confer ripe apple fruit flavor. Alcohol acyl transferase that can use a wide range of alcohols as substrate to produce esters. In Malus domestica (Apple), this protein is Alcohol acyl transferase 1 allele RGc.